A 76-amino-acid chain; its full sequence is uncharacterized protein (76 aa).

It to K.pneumoniae LtrA, E.coli YjiE, and YhcS.

This is an uncharacterized protein from Escherichia coli O6:H1 (strain CFT073 / ATCC 700928 / UPEC).